Here is a 141-residue protein sequence, read N- to C-terminus: Protein MGF 100-2L (141 aa).

Belongs to the asfivirus MGF 100 family.

In terms of biological role, plays a role in virus cell tropism, and may be required for efficient virus replication in macrophages. The chain is Protein MGF 100-2L from African swine fever virus (isolate Tick/Malawi/Lil 20-1/1983) (ASFV).